The primary structure comprises 186 residues: Small ribosomal subunit protein uS19 (186 aa).

Residues 1–95 are unknown; that stretch reads MREAIKRYGS…YEELYAQYKQ (95 aa). The interval 96–186 is small ribosomal subunit protein uS19; sequence MTEKKAYVDP…EKTAKVVKKK (91 aa).

It belongs to the universal ribosomal protein uS19 family.

Protein S19 forms a complex with S13 that binds strongly to the 16S ribosomal RNA. This is Small ribosomal subunit protein uS19 from Aquifex aeolicus (strain VF5).